The primary structure comprises 257 residues: tRNA (guanine-N(1)-)-methyltransferase (257 aa).

S-adenosyl-L-methionine-binding positions include Gly-113 and 133 to 138 (IGDYVL).

The protein belongs to the RNA methyltransferase TrmD family. As to quaternary structure, homodimer.

Its subcellular location is the cytoplasm. The catalysed reaction is guanosine(37) in tRNA + S-adenosyl-L-methionine = N(1)-methylguanosine(37) in tRNA + S-adenosyl-L-homocysteine + H(+). Functionally, specifically methylates guanosine-37 in various tRNAs. The protein is tRNA (guanine-N(1)-)-methyltransferase of Cronobacter sakazakii (strain ATCC BAA-894) (Enterobacter sakazakii).